A 205-amino-acid chain; its full sequence is Protein-L-isoaspartate O-methyltransferase (205 aa).

Ser56 is an active-site residue.

It belongs to the methyltransferase superfamily. L-isoaspartyl/D-aspartyl protein methyltransferase family.

Its subcellular location is the cytoplasm. It carries out the reaction [protein]-L-isoaspartate + S-adenosyl-L-methionine = [protein]-L-isoaspartate alpha-methyl ester + S-adenosyl-L-homocysteine. Catalyzes the methyl esterification of L-isoaspartyl residues in peptides and proteins that result from spontaneous decomposition of normal L-aspartyl and L-asparaginyl residues. It plays a role in the repair and/or degradation of damaged proteins. This chain is Protein-L-isoaspartate O-methyltransferase, found in Aeromonas salmonicida (strain A449).